A 232-amino-acid chain; its full sequence is Cytidylate kinase (232 aa).

Residue 11 to 19 participates in ATP binding; that stretch reads GPAGAGKST.

It belongs to the cytidylate kinase family. Type 1 subfamily.

Its subcellular location is the cytoplasm. It catalyses the reaction CMP + ATP = CDP + ADP. It carries out the reaction dCMP + ATP = dCDP + ADP. This chain is Cytidylate kinase, found in Desulfitobacterium hafniense (strain Y51).